Reading from the N-terminus, the 263-residue chain is Hydroxyethylthiazole kinase (263 aa).

M41 is a substrate binding site. ATP is bound by residues R117 and S163. G190 serves as a coordination point for substrate.

The protein belongs to the Thz kinase family. Mg(2+) is required as a cofactor.

It carries out the reaction 5-(2-hydroxyethyl)-4-methylthiazole + ATP = 4-methyl-5-(2-phosphooxyethyl)-thiazole + ADP + H(+). The protein operates within cofactor biosynthesis; thiamine diphosphate biosynthesis; 4-methyl-5-(2-phosphoethyl)-thiazole from 5-(2-hydroxyethyl)-4-methylthiazole: step 1/1. Catalyzes the phosphorylation of the hydroxyl group of 4-methyl-5-beta-hydroxyethylthiazole (THZ). The chain is Hydroxyethylthiazole kinase from Lactiplantibacillus plantarum (strain ATCC BAA-793 / NCIMB 8826 / WCFS1) (Lactobacillus plantarum).